A 695-amino-acid chain; its full sequence is UvrABC system protein B (695 aa).

The Helicase ATP-binding domain maps to 25 to 176; it reads KSISEGHRFQ…NQRDVLRDLA (152 aa). Residue 38–45 participates in ATP binding; sequence GATGTGKT. Residues 91–114 carry the Beta-hairpin motif; that stretch reads YYDYYQPEAYVPSTDTYIAKSSSI. Positions 454-617 constitute a Helicase C-terminal domain; it reads LLGEIYLRLE…ITPKPIVKKN (164 aa). The region spanning 652–687 is the UVR domain; that stretch reads PELIGQLELKMKEAAKNLEFEEAAQLRDRIKKLRQR.

Belongs to the UvrB family. As to quaternary structure, forms a heterotetramer with UvrA during the search for lesions. Interacts with UvrC in an incision complex.

It localises to the cytoplasm. The UvrABC repair system catalyzes the recognition and processing of DNA lesions. A damage recognition complex composed of 2 UvrA and 2 UvrB subunits scans DNA for abnormalities. Upon binding of the UvrA(2)B(2) complex to a putative damaged site, the DNA wraps around one UvrB monomer. DNA wrap is dependent on ATP binding by UvrB and probably causes local melting of the DNA helix, facilitating insertion of UvrB beta-hairpin between the DNA strands. Then UvrB probes one DNA strand for the presence of a lesion. If a lesion is found the UvrA subunits dissociate and the UvrB-DNA preincision complex is formed. This complex is subsequently bound by UvrC and the second UvrB is released. If no lesion is found, the DNA wraps around the other UvrB subunit that will check the other stand for damage. This is UvrABC system protein B from Synechococcus sp. (strain JA-2-3B'a(2-13)) (Cyanobacteria bacterium Yellowstone B-Prime).